Reading from the N-terminus, the 289-residue chain is Shikimate dehydrogenase (NADP(+)) (289 aa).

Shikimate-binding positions include 22 to 24 (SRS) and Thr69. The active-site Proton acceptor is Lys73. Residue Glu85 coordinates NADP(+). Positions 94 and 109 each coordinate shikimate. Residues 134–138 (GAGGA), 158–163 (NRTLSR), and Ile226 each bind NADP(+). Tyr228 is a shikimate binding site. Gly249 is an NADP(+) binding site.

Belongs to the shikimate dehydrogenase family. As to quaternary structure, homodimer.

It carries out the reaction shikimate + NADP(+) = 3-dehydroshikimate + NADPH + H(+). It functions in the pathway metabolic intermediate biosynthesis; chorismate biosynthesis; chorismate from D-erythrose 4-phosphate and phosphoenolpyruvate: step 4/7. In terms of biological role, involved in the biosynthesis of the chorismate, which leads to the biosynthesis of aromatic amino acids. Catalyzes the reversible NADPH linked reduction of 3-dehydroshikimate (DHSA) to yield shikimate (SA). The protein is Shikimate dehydrogenase (NADP(+)) of Brucella abortus (strain S19).